The following is a 480-amino-acid chain: Probable glycosyltransferase At5g25310 (480 aa).

Residues 1 to 10 are Cytoplasmic-facing; the sequence is MDKFQSKFTR. A helical; Signal-anchor for type II membrane protein membrane pass occupies residues 11 to 31; the sequence is FGFISICFGSIALVLLISHCS. Residues 32–480 are Lumenal-facing; it reads TSFFDYSFQK…WLRRLNLKLT (449 aa). 5 N-linked (GlcNAc...) asparagine glycosylation sites follow: N85, N120, N243, N271, and N281.

The protein belongs to the glycosyltransferase 47 family.

It is found in the golgi apparatus membrane. Its function is as follows. May be involved in cell wall biosynthesis. The sequence is that of Probable glycosyltransferase At5g25310 from Arabidopsis thaliana (Mouse-ear cress).